A 562-amino-acid polypeptide reads, in one-letter code: NAD-dependent malic enzyme (562 aa).

The Proton donor role is filled by Y101. Position 154 (R154) interacts with NAD(+). The active-site Proton acceptor is K172. The a divalent metal cation site is built by E243, D244, and D267. NAD(+) contacts are provided by D267 and N415.

Belongs to the malic enzymes family. Homotetramer. It depends on Mg(2+) as a cofactor. Mn(2+) serves as cofactor.

It catalyses the reaction (S)-malate + NAD(+) = pyruvate + CO2 + NADH. The enzyme catalyses oxaloacetate + H(+) = pyruvate + CO2. This is NAD-dependent malic enzyme from Shewanella sp. (strain ANA-3).